The sequence spans 424 residues: Enolase (424 aa).

Gln-165 lines the (2R)-2-phosphoglycerate pocket. Glu-207 (proton donor) is an active-site residue. Positions 244, 283, and 310 each coordinate Mg(2+). 4 residues coordinate (2R)-2-phosphoglycerate: Lys-335, Arg-364, Ser-365, and Lys-386. The active-site Proton acceptor is the Lys-335.

This sequence belongs to the enolase family. It depends on Mg(2+) as a cofactor.

It is found in the cytoplasm. It localises to the secreted. Its subcellular location is the cell surface. The enzyme catalyses (2R)-2-phosphoglycerate = phosphoenolpyruvate + H2O. The protein operates within carbohydrate degradation; glycolysis; pyruvate from D-glyceraldehyde 3-phosphate: step 4/5. In terms of biological role, catalyzes the reversible conversion of 2-phosphoglycerate (2-PG) into phosphoenolpyruvate (PEP). It is essential for the degradation of carbohydrates via glycolysis. The sequence is that of Enolase from Chlamydia caviae (strain ATCC VR-813 / DSM 19441 / 03DC25 / GPIC) (Chlamydophila caviae).